Here is a 503-residue protein sequence, read N- to C-terminus: tRNA-guanine(15) transglycosylase (503 aa).

D86 serves as the catalytic Nucleophile. Residue D121 coordinates substrate. Zn(2+) contacts are provided by C278, C280, and C283.

This sequence belongs to the archaeosine tRNA-ribosyltransferase family. It depends on Zn(2+) as a cofactor.

It catalyses the reaction guanosine(15) in tRNA + 7-cyano-7-deazaguanine = 7-cyano-7-carbaguanosine(15) in tRNA + guanine. It participates in tRNA modification; archaeosine-tRNA biosynthesis. In terms of biological role, exchanges the guanine residue with 7-cyano-7-deazaguanine (preQ0) at position 15 in the dihydrouridine loop (D-loop) of archaeal tRNAs. In Saccharolobus solfataricus (strain ATCC 35092 / DSM 1617 / JCM 11322 / P2) (Sulfolobus solfataricus), this protein is tRNA-guanine(15) transglycosylase.